Reading from the N-terminus, the 76-residue chain is MGSFSIWHWLIVLVIVMLIFGTKKLRNVGQDLGGAVKGFKDGMKEANADKPAEEAQPTQQVGGHTIDVEVKEKTKS.

A helical transmembrane segment spans residues 1 to 21 (MGSFSIWHWLIVLVIVMLIFG). The disordered stretch occupies residues 47–76 (NADKPAEEAQPTQQVGGHTIDVEVKEKTKS). Residues 66–76 (IDVEVKEKTKS) show a composition bias toward basic and acidic residues.

Belongs to the TatA/E family. The Tat system comprises two distinct complexes: a TatABC complex, containing multiple copies of TatA, TatB and TatC subunits, and a separate TatA complex, containing only TatA subunits. Substrates initially bind to the TatABC complex, which probably triggers association of the separate TatA complex to form the active translocon.

Its subcellular location is the cell inner membrane. Its function is as follows. Part of the twin-arginine translocation (Tat) system that transports large folded proteins containing a characteristic twin-arginine motif in their signal peptide across membranes. TatA could form the protein-conducting channel of the Tat system. In Dechloromonas aromatica (strain RCB), this protein is Sec-independent protein translocase protein TatA.